The following is a 516-amino-acid chain: uncharacterized protein (516 aa).

Helical transmembrane passes span 183–203 (SAAD…GDGV), 261–281 (VLKT…TYII), 308–328 (VMNG…TALL), 329–349 (LDHQ…AYSF), 356–376 (LLDV…GQVL), 379–399 (LAFS…LALA), 430–450 (LGHG…FLAL), 461–481 (PAWL…IWLL), and 492–512 (IVFA…ASAF).

Its subcellular location is the cell membrane. Possible permease/transporter. This is an uncharacterized protein from Sinorhizobium fredii (strain NBRC 101917 / NGR234).